The following is a 408-amino-acid chain: LL-diaminopimelate aminotransferase (408 aa).

The substrate site is built by Tyr-15 and Gly-42. Residues Tyr-72, 108–109, Tyr-132, Asn-187, Tyr-218, and 246–248 each bind pyridoxal 5'-phosphate; these read SK and SFS. Substrate is bound by residues Lys-109, Tyr-132, and Asn-187. Lys-249 carries the N6-(pyridoxal phosphate)lysine modification. Pyridoxal 5'-phosphate is bound by residues Arg-257 and Asn-292. Substrate-binding residues include Asn-292 and Arg-388.

The protein belongs to the class-I pyridoxal-phosphate-dependent aminotransferase family. LL-diaminopimelate aminotransferase subfamily. In terms of assembly, homodimer. Requires pyridoxal 5'-phosphate as cofactor.

The enzyme catalyses (2S,6S)-2,6-diaminopimelate + 2-oxoglutarate = (S)-2,3,4,5-tetrahydrodipicolinate + L-glutamate + H2O + H(+). The protein operates within amino-acid biosynthesis; L-lysine biosynthesis via DAP pathway; LL-2,6-diaminopimelate from (S)-tetrahydrodipicolinate (aminotransferase route): step 1/1. Functionally, involved in the synthesis of meso-diaminopimelate (m-DAP or DL-DAP), required for both lysine and peptidoglycan biosynthesis. Catalyzes the direct conversion of tetrahydrodipicolinate to LL-diaminopimelate. The protein is LL-diaminopimelate aminotransferase of Leptospira biflexa serovar Patoc (strain Patoc 1 / Ames).